Consider the following 185-residue polypeptide: Small ribosomal subunit protein uS4 (185 aa).

Residues 108 to 170 form the S4 RNA-binding domain; that stretch reads RRLQTLVYRK…GKSPFVDASH (63 aa).

Belongs to the universal ribosomal protein uS4 family. In terms of assembly, part of the 30S ribosomal subunit. Contacts protein S5. The interaction surface between S4 and S5 is involved in control of translational fidelity.

In terms of biological role, one of the primary rRNA binding proteins, it binds directly to 16S rRNA where it nucleates assembly of the body of the 30S subunit. Its function is as follows. With S5 and S12 plays an important role in translational accuracy. The sequence is that of Small ribosomal subunit protein uS4 from Methanoregula boonei (strain DSM 21154 / JCM 14090 / 6A8).